The primary structure comprises 27 residues: Cupiennin-3c (27 aa).

In terms of tissue distribution, expressed by the venom gland.

Its subcellular location is the secreted. The sequence is that of Cupiennin-3c from Cupiennius salei (American wandering spider).